We begin with the raw amino-acid sequence, 93 residues long: Cobalt transport protein CbiN (93 aa).

Helical transmembrane passes span 5–25 and 63–83; these read LMLL…NHGG and LLFT…LGYC.

Belongs to the CbiN family. In terms of assembly, forms an energy-coupling factor (ECF) transporter complex composed of an ATP-binding protein (A component, CbiO), a transmembrane protein (T component, CbiQ) and 2 possible substrate-capture proteins (S components, CbiM and CbiN) of unknown stoichimetry.

The protein localises to the cell inner membrane. It functions in the pathway cofactor biosynthesis; adenosylcobalamin biosynthesis. Functionally, part of the energy-coupling factor (ECF) transporter complex CbiMNOQ involved in cobalt import. The protein is Cobalt transport protein CbiN of Salmonella paratyphi B (strain ATCC BAA-1250 / SPB7).